The chain runs to 232 residues: Large ribosomal subunit protein uL1 (232 aa).

The protein belongs to the universal ribosomal protein uL1 family. In terms of assembly, part of the 50S ribosomal subunit.

In terms of biological role, binds directly to 23S rRNA. The L1 stalk is quite mobile in the ribosome, and is involved in E site tRNA release. Its function is as follows. Protein L1 is also a translational repressor protein, it controls the translation of the L11 operon by binding to its mRNA. The protein is Large ribosomal subunit protein uL1 of Roseobacter denitrificans (strain ATCC 33942 / OCh 114) (Erythrobacter sp. (strain OCh 114)).